The sequence spans 490 residues: MNAPVTPKKLIKGALGDWEVVIGMEIHAQVTSRSKLFSGASTAFGAEPNAHVSLVDAAMPGMLPVINRECVAQAVRTGLGLKAQINHRSVFDRKNYFYPDLPQGYQISQYKSPIVGEGEVLVDLPDGETIRVGIERLHLEQDAGKSLHDQHPSLSFVDLNRSGVALMEIVSKPDLRSSEEAKAYVTKLRTILRYLGTCDGDMEKGNLRADVNVSVRRPGEPFGTRCEIKNVNSIRFIGQAIETEARRQIAILEDGGWIEQETRLYDPNRNETRSMRSKEEAHDYRYFPDPDLLPLEIEQAFIDGLRTELPELPDAKKARFVAEYGLSAYDATVLVAERASADYFEAVAKGRDGKAAANWVINELFGRLNKEGHGIEGSPVSAAQLGAIIDLIADGTISGKIAKDLFEIVWGEGGDPRAIVESRGLKQVTDTGAIEAAVDQIIAANPDKVAQAKAKPTLLGWFVGQTMKATGGKANPAAVNALLKTKLGIE.

The protein belongs to the GatB/GatE family. GatB subfamily. In terms of assembly, heterotrimer of A, B and C subunits.

The enzyme catalyses L-glutamyl-tRNA(Gln) + L-glutamine + ATP + H2O = L-glutaminyl-tRNA(Gln) + L-glutamate + ADP + phosphate + H(+). It carries out the reaction L-aspartyl-tRNA(Asn) + L-glutamine + ATP + H2O = L-asparaginyl-tRNA(Asn) + L-glutamate + ADP + phosphate + 2 H(+). Allows the formation of correctly charged Asn-tRNA(Asn) or Gln-tRNA(Gln) through the transamidation of misacylated Asp-tRNA(Asn) or Glu-tRNA(Gln) in organisms which lack either or both of asparaginyl-tRNA or glutaminyl-tRNA synthetases. The reaction takes place in the presence of glutamine and ATP through an activated phospho-Asp-tRNA(Asn) or phospho-Glu-tRNA(Gln). This is Aspartyl/glutamyl-tRNA(Asn/Gln) amidotransferase subunit B from Methylobacterium sp. (strain 4-46).